The following is a 332-amino-acid chain: UPF0194 membrane protein YbhG (332 aa).

The first 16 residues, 1-16 (MMKKPVVIGLAVVVLA), serve as a signal peptide directing secretion. Positions 141 to 210 (RTISANDLEN…NLQDSTLIAP (70 aa)) form a coiled coil.

The protein belongs to the UPF0194 family.

It localises to the periplasm. This chain is UPF0194 membrane protein YbhG (ybhG), found in Shigella flexneri.